A 407-amino-acid chain; its full sequence is Phosphopentomutase (407 aa).

6 residues coordinate Mn(2+): Asp-10, Asp-306, His-311, Asp-347, His-348, and His-359.

Belongs to the phosphopentomutase family. The cofactor is Mn(2+).

The protein resides in the cytoplasm. It catalyses the reaction 2-deoxy-alpha-D-ribose 1-phosphate = 2-deoxy-D-ribose 5-phosphate. The catalysed reaction is alpha-D-ribose 1-phosphate = D-ribose 5-phosphate. It participates in carbohydrate degradation; 2-deoxy-D-ribose 1-phosphate degradation; D-glyceraldehyde 3-phosphate and acetaldehyde from 2-deoxy-alpha-D-ribose 1-phosphate: step 1/2. Its function is as follows. Isomerase that catalyzes the conversion of deoxy-ribose 1-phosphate (dRib-1-P) and ribose 1-phosphate (Rib-1-P) to deoxy-ribose 5-phosphate (dRib-5-P) and ribose 5-phosphate (Rib-5-P), respectively. The protein is Phosphopentomutase of Photorhabdus laumondii subsp. laumondii (strain DSM 15139 / CIP 105565 / TT01) (Photorhabdus luminescens subsp. laumondii).